The primary structure comprises 55 residues: Small polypeptide DEVIL 10 (55 aa).

An N-linked (GlcNAc...) asparagine glycan is attached at Asn7. The interval Arg19–Asp50 is required for DVL/RTFL small polypeptide activity. Residues Arg32–Trp48 traverse the membrane as a helical segment.

This sequence belongs to the DVL/RTFL small polypeptides family.

It is found in the cell membrane. Small polypeptide acting as a regulatory molecule which coordinates cellular responses required for differentiation, growth and development, probably by restricting polar cell proliferation in lateral organs and coordinating socket cell recruitment and differentiation at trichome sites. The sequence is that of Small polypeptide DEVIL 10 from Arabidopsis thaliana (Mouse-ear cress).